Reading from the N-terminus, the 861-residue chain is Probable linoleate 9S-lipoxygenase 3 (861 aa).

Residues 33 to 160 (FTDLASSLTG…NYKSDRIFFA (128 aa)) enclose the PLAT domain. The region spanning 163–861 (PYLPSDTPEL…GKGIPNSVSI (699 aa)) is the Lipoxygenase domain. A disordered region spans residues 220 to 247 (TLGGSAEYPYPRRGRTGRPPTRTDPKSE). Residues histidine 522, histidine 527, histidine 713, asparagine 717, and isoleucine 861 each coordinate Fe cation.

It belongs to the lipoxygenase family. Monomer. Fe cation is required as a cofactor. In terms of tissue distribution, expressed in tubers and roots. Not detected in leaves, flowers, stems, shoot tips, or axillary buds.

The protein localises to the cytoplasm. The catalysed reaction is (9Z,12Z)-octadecadienoate + O2 = (9S)-hydroperoxy-(10E,12Z)-octadecadienoate. It functions in the pathway lipid metabolism; oxylipin biosynthesis. In terms of biological role, plant lipoxygenases may be involved in a number of diverse aspects of plant physiology including growth and development, pest resistance, and senescence or responses to wounding. Catalyzes the hydroperoxidation of lipids containing a cis,cis-1,4-pentadiene structure. In Solanum tuberosum (Potato), this protein is Probable linoleate 9S-lipoxygenase 3 (LOX1.3).